Here is a 237-residue protein sequence, read N- to C-terminus: Ergosterol biosynthesis protein 29 (237 aa).

The chain crosses the membrane as a helical span at residues 36 to 56 (ITLFLIVVGTLAFFNELYITI).

The protein resides in the endoplasmic reticulum membrane. Its function is as follows. Part of the third module of ergosterol biosynthesis pathway that includes the late steps of the pathway. ERG29 regulates the activity of the iron-containing C4-methylsterol oxidase ERG25. The third module or late pathway involves the ergosterol synthesis itself through consecutive reactions that mainly occur in the endoplasmic reticulum (ER) membrane. Firstly, the squalene synthase ERG9 catalyzes the condensation of 2 farnesyl pyrophosphate moieties to form squalene, which is the precursor of all steroids. Squalene synthase is crucial for balancing the incorporation of farnesyl diphosphate (FPP) into sterol and nonsterol isoprene synthesis. Secondly, the squalene epoxidase ERG1 catalyzes the stereospecific oxidation of squalene to (S)-2,3-epoxysqualene, which is considered to be a rate-limiting enzyme in steroid biosynthesis. Then, the lanosterol synthase ERG7 catalyzes the cyclization of (S)-2,3 oxidosqualene to lanosterol, a reaction that forms the sterol core. In the next steps, lanosterol is transformed to zymosterol through a complex process involving various demethylation, reduction and desaturation reactions. The lanosterol 14-alpha-demethylase ERG11 (also known as CYP51) catalyzes C14-demethylation of lanosterol to produce 4,4'-dimethyl cholesta-8,14,24-triene-3-beta-ol, which is critical for ergosterol biosynthesis. The C-14 reductase ERG24 reduces the C14=C15 double bond of 4,4-dimethyl-cholesta-8,14,24-trienol to produce 4,4-dimethyl-cholesta-8,24-dienol. 4,4-dimethyl-cholesta-8,24-dienol is substrate of the C-4 demethylation complex ERG25-ERG26-ERG27 in which ERG25 catalyzes the three-step monooxygenation required for the demethylation of 4,4-dimethyl and 4alpha-methylsterols, ERG26 catalyzes the oxidative decarboxylation that results in a reduction of the 3-beta-hydroxy group at the C-3 carbon to an oxo group, and ERG27 is responsible for the reduction of the keto group on the C-3. ERG28 has a role as a scaffold to help anchor ERG25, ERG26 and ERG27 to the endoplasmic reticulum and ERG29 regulates the activity of the iron-containing C4-methylsterol oxidase ERG25. Then, the sterol 24-C-methyltransferase ERG6 catalyzes the methyl transfer from S-adenosyl-methionine to the C-24 of zymosterol to form fecosterol. The C-8 sterol isomerase ERG2 catalyzes the reaction which results in unsaturation at C-7 in the B ring of sterols and thus converts fecosterol to episterol. The sterol-C5-desaturase ERG3 then catalyzes the introduction of a C-5 double bond in the B ring to produce 5-dehydroepisterol. The C-22 sterol desaturase ERG5 further converts 5-dehydroepisterol into ergosta-5,7,22,24(28)-tetraen-3beta-ol by forming the C-22(23) double bond in the sterol side chain. Finally, ergosta-5,7,22,24(28)-tetraen-3beta-ol is substrate of the C-24(28) sterol reductase ERG4 to produce ergosterol. Functionally, plays a role in maintaining mitochondrial and plasma membrane integrity and consequently impacting the iron homeostasis, respiratory metabolism and antioxidant response. The sequence is that of Ergosterol biosynthesis protein 29 from Saccharomyces cerevisiae (strain ATCC 204508 / S288c) (Baker's yeast).